The chain runs to 1081 residues: Cellulose synthase A catalytic subunit 1 [UDP-forming] (1081 aa).

Methionine 1 is modified (N-acetylmethionine). Residues 1–270 lie on the Cytoplasmic side of the membrane; it reads MEASAGLVAG…SRVVPIPSSR (270 aa). Zn(2+)-binding residues include cysteine 39, cysteine 42, cysteine 58, cysteine 61, cysteine 66, cysteine 69, cysteine 81, and cysteine 84. The RING-type; degenerate zinc-finger motif lies at 39-85; sequence CQICGDDVGLAETGDVFVACNECAFPVCRPCYEYERKDGTQCCPQCK. The disordered stretch occupies residues 118–195; it reads GANKARHQRH…RQPVPVRIVD (78 aa). The segment covering 127-139 has biased composition (basic and acidic residues); that stretch reads HGEEFSSSSRHES. A compositionally biased stretch (polar residues) spans 158–168; the sequence is PDTQSVRTTSG. Residues 271 to 291 form a helical membrane-spanning segment; sequence LTPYRVVIILRLIILCFFLQY. Residues 292-299 lie on the Extracellular side of the membrane; it reads RTTHPVKN. A helical transmembrane segment spans residues 300–320; it reads AYPLWLTSVICEIWFAFSWLL. Topologically, residues 321–856 are cytoplasmic; it reads DQFPKWYPIN…LLERIAYINT (536 aa). 4 residues coordinate UDP-alpha-D-glucose: serine 359, lysine 365, glutamate 366, and aspartate 395. Residue aspartate 395 is part of the active site. A coiled-coil region spans residues 449–476; the sequence is VKERRAMKREYEEFKVRINALVAKAQKI. Lysine 536 is a UDP-alpha-D-glucose binding site. Residues lysine 537 and aspartate 561 each coordinate Mn(2+). The active site involves aspartate 780. Residues 857 to 877 traverse the membrane as a helical segment; sequence IVYPITSIPLIAYCILPAFCL. At 878–889 the chain is on the extracellular side; sequence ITDRFIIPEISN. A helical membrane pass occupies residues 890–910; it reads YASIWFILLFISIAVTGILEL. At 911 to 925 the chain is on the cytoplasmic side; that stretch reads RWSGVSIEDWWRNEQ. A helical membrane pass occupies residues 926-946; sequence FWVIGGTSAHLFAVFQGLLKV. Residues 947-976 are Extracellular-facing; sequence LAGIDTNFTVTSKATDEDGDFAELYIFKWT. N-linked (GlcNAc...) asparagine glycosylation occurs at asparagine 953. Residues 977–997 form a helical membrane-spanning segment; that stretch reads ALLIPPTTVLLVNLIGIVAGV. The Cytoplasmic portion of the chain corresponds to 998–1008; the sequence is SYAVNSGYQSW. The chain crosses the membrane as a helical span at residues 1009 to 1029; the sequence is GPLFGKLFFALWVIAHLYPFL. The Extracellular portion of the chain corresponds to 1030 to 1038; that stretch reads KGLLGRQNR. A helical membrane pass occupies residues 1039 to 1059; that stretch reads TPTIVIVWSVLLASIFSLLWV. Residues 1060-1081 lie on the Cytoplasmic side of the membrane; the sequence is RINPFVDANPNANNFNGKGGVF.

This sequence belongs to the glycosyltransferase 2 family. Plant cellulose synthase subfamily. In terms of assembly, interacts with CESA3 and CESA6. Assembly with CESA3 and CESA6 is required for functional complex in primary cell wall cellulose synthesis. Interacts with STL1 and STL2, but not with GOT1. Binds to CSI1. Interacts with PAT24/TIP1. Zn(2+) is required as a cofactor. The cofactor is Mn(2+). S-acylated. In terms of tissue distribution, expressed in germinating seeds, seedlings, roots, stems, shoots leaves and flowers, but not in mature flowers.

The protein resides in the cell membrane. It catalyses the reaction [(1-&gt;4)-beta-D-glucosyl](n) + UDP-alpha-D-glucose = [(1-&gt;4)-beta-D-glucosyl](n+1) + UDP + H(+). It functions in the pathway glycan metabolism; plant cellulose biosynthesis. In terms of biological role, catalytic subunit of cellulose synthase terminal complexes ('rosettes'), required for beta-1,4-glucan microfibril crystallization, a major mechanism of the cell wall formation. Involved in the primary cell wall formation. Required during embryogenesis for cell elongation, orientation of cell expansion and complex cell wall formations, such as interdigitated pattern of epidermal pavement cells, stomatal guard cells and trichomes. Plays a role in lateral roots formation, but seems not necessary for the development of tip-growing cells such as root hairs. The presence of each protein CESA1 and CESA6 is critical for cell expansion after germination. This chain is Cellulose synthase A catalytic subunit 1 [UDP-forming], found in Arabidopsis thaliana (Mouse-ear cress).